The primary structure comprises 367 residues: tRNA-specific 2-thiouridylase MnmA (367 aa).

Residues 13-20 (GLSGGVDS) and Met-39 each bind ATP. The interval 99–101 (NPD) is interaction with target base in tRNA. The active-site Nucleophile is Cys-104. A disulfide bridge connects residues Cys-104 and Cys-200. Residue Gly-128 coordinates ATP. The tract at residues 150 to 152 (KDQ) is interaction with tRNA. The Cysteine persulfide intermediate role is filled by Cys-200. Residues 307–308 (RY) are interaction with tRNA.

It belongs to the MnmA/TRMU family.

It localises to the cytoplasm. The catalysed reaction is S-sulfanyl-L-cysteinyl-[protein] + uridine(34) in tRNA + AH2 + ATP = 2-thiouridine(34) in tRNA + L-cysteinyl-[protein] + A + AMP + diphosphate + H(+). Catalyzes the 2-thiolation of uridine at the wobble position (U34) of tRNA, leading to the formation of s(2)U34. The sequence is that of tRNA-specific 2-thiouridylase MnmA from Neisseria meningitidis serogroup A / serotype 4A (strain DSM 15465 / Z2491).